The sequence spans 196 residues: Putative NADH dehydrogenase/NAD(P)H nitroreductase PXO_03909 (196 aa).

Belongs to the nitroreductase family. HadB/RutE subfamily. FMN is required as a cofactor.

The polypeptide is Putative NADH dehydrogenase/NAD(P)H nitroreductase PXO_03909 (Xanthomonas oryzae pv. oryzae (strain PXO99A)).